The chain runs to 420 residues: UDP-N-acetylglucosamine 1-carboxyvinyltransferase (420 aa).

Residue 22-23 coordinates phosphoenolpyruvate; sequence KN. R93 is a UDP-N-acetyl-alpha-D-glucosamine binding site. The active-site Proton donor is the C117. C117 carries the 2-(S-cysteinyl)pyruvic acid O-phosphothioketal modification. UDP-N-acetyl-alpha-D-glucosamine is bound by residues D307 and I329.

The protein belongs to the EPSP synthase family. MurA subfamily.

The protein resides in the cytoplasm. The enzyme catalyses phosphoenolpyruvate + UDP-N-acetyl-alpha-D-glucosamine = UDP-N-acetyl-3-O-(1-carboxyvinyl)-alpha-D-glucosamine + phosphate. It functions in the pathway cell wall biogenesis; peptidoglycan biosynthesis. Cell wall formation. Adds enolpyruvyl to UDP-N-acetylglucosamine. In Shewanella halifaxensis (strain HAW-EB4), this protein is UDP-N-acetylglucosamine 1-carboxyvinyltransferase.